Here is a 320-residue protein sequence, read N- to C-terminus: Acetyl-coenzyme A carboxylase carboxyl transferase subunit alpha (320 aa).

In terms of domain architecture, CoA carboxyltransferase C-terminal spans 39–293 (ALDAKAAKLL…RGAIAAMLKE (255 aa)).

It belongs to the AccA family. Acetyl-CoA carboxylase is a heterohexamer composed of biotin carboxyl carrier protein (AccB), biotin carboxylase (AccC) and two subunits each of ACCase subunit alpha (AccA) and ACCase subunit beta (AccD).

It is found in the cytoplasm. It carries out the reaction N(6)-carboxybiotinyl-L-lysyl-[protein] + acetyl-CoA = N(6)-biotinyl-L-lysyl-[protein] + malonyl-CoA. Its pathway is lipid metabolism; malonyl-CoA biosynthesis; malonyl-CoA from acetyl-CoA: step 1/1. In terms of biological role, component of the acetyl coenzyme A carboxylase (ACC) complex. First, biotin carboxylase catalyzes the carboxylation of biotin on its carrier protein (BCCP) and then the CO(2) group is transferred by the carboxyltransferase to acetyl-CoA to form malonyl-CoA. In Ruegeria pomeroyi (strain ATCC 700808 / DSM 15171 / DSS-3) (Silicibacter pomeroyi), this protein is Acetyl-coenzyme A carboxylase carboxyl transferase subunit alpha.